The sequence spans 492 residues: T-box transcription factor TBX5-A (492 aa).

The segment at 1 to 43 (MADSEDTFRLQNSPSDSEPKDLQNEGKSDKQNAAVSKSPSSQT) is disordered. Residues 17 to 30 (SEPKDLQNEGKSDK) show a composition bias toward basic and acidic residues. The span at 31-43 (QNAAVSKSPSSQT) shows a compositional bias: polar residues. A DNA-binding region (T-box) is located at residues 62-237 (LWTKFHEVGT…NNPFAKGFRG (176 aa)). Positions 331–352 (AGEHPYKKPYVESSSSEDDHYY) are disordered.

In terms of assembly, monomer. Homodimer (via the T-box); binds DNA as homodimer. Expressed in the dorsal optic cup of developing eye, pectoral fin buds and heart. At 31 hpf, when the pectoral fin buds have begun bulging outwards, restricted expression is detected throughout the mesenchyme of the early fin buds and these high levels of expression continue until later stages.

Its subcellular location is the nucleus. It localises to the cytoplasm. Required for pectoral fin formation. Together with tbx5b, involved in eye and heart development. Required for the looping stage of heart development. May bind to the core DNA motif of promoters. This Danio rerio (Zebrafish) protein is T-box transcription factor TBX5-A (tbx5a).